The chain runs to 156 residues: Phosphopantetheine adenylyltransferase (156 aa).

T10 is a binding site for substrate. ATP is bound by residues 10–11 and H18; that span reads TF. Substrate-binding residues include K42, L74, and R88. ATP contacts are provided by residues 89–91, E99, and 124–130; these read GLR and NAFISSS.

This sequence belongs to the bacterial CoaD family. In terms of assembly, homohexamer. Mg(2+) serves as cofactor.

It is found in the cytoplasm. It carries out the reaction (R)-4'-phosphopantetheine + ATP + H(+) = 3'-dephospho-CoA + diphosphate. It functions in the pathway cofactor biosynthesis; coenzyme A biosynthesis; CoA from (R)-pantothenate: step 4/5. In terms of biological role, reversibly transfers an adenylyl group from ATP to 4'-phosphopantetheine, yielding dephospho-CoA (dPCoA) and pyrophosphate. This chain is Phosphopantetheine adenylyltransferase, found in Campylobacter curvus (strain 525.92).